Reading from the N-terminus, the 127-residue chain is Large ribosomal subunit protein bL17 (127 aa).

It belongs to the bacterial ribosomal protein bL17 family. Part of the 50S ribosomal subunit. Contacts protein L32.

The chain is Large ribosomal subunit protein bL17 from Pediococcus pentosaceus (strain ATCC 25745 / CCUG 21536 / LMG 10740 / 183-1w).